A 278-amino-acid chain; its full sequence is Autotransporter adhesin BtaF (278 aa).

The first 29 residues, 1–29 (MKLPPVFVFELVENQGLANIALIRPRVIA), serve as a signal peptide directing secretion. The interval 30-182 (PDNNLRPGGI…RAAIRQNSAA (153 aa)) is surface exposed passenger domain. The segment at 186–224 (LGQRVDGLQGQINSARKEARAGAANAAALSGLRYDNRPG) is outer membrane translocation of the passenger domain. Residues 225–278 (KVSIATGVGGFKGSTALAAGIGYTSKNENARYNVSVAYNEAGTSWNAGASFTLN) are translocator domain.

Belongs to the autotransporter-2 (AT-2) (TC 1.B.40) family. In terms of assembly, homotrimer.

It localises to the cell surface. The protein localises to the cell outer membrane. Participates in bacterial attachment to several surfaces, including various extracellular matrix (ECM) components and a hydrophobic abiotic surface. Involved in adhesion to host epithelial cells and is required for full virulence in mice. Also implicated in the resistance to porcine serum. The polypeptide is Autotransporter adhesin BtaF (Brucella suis biovar 1 (strain 1330)).